The chain runs to 249 residues: Pyridoxine 5'-phosphate synthase (249 aa).

Residue Asn7 coordinates 3-amino-2-oxopropyl phosphate. 9-10 (DH) serves as a coordination point for 1-deoxy-D-xylulose 5-phosphate. Residue Arg18 coordinates 3-amino-2-oxopropyl phosphate. His43 acts as the Proton acceptor in catalysis. Arg45 and His50 together coordinate 1-deoxy-D-xylulose 5-phosphate. Glu70 functions as the Proton acceptor in the catalytic mechanism. Thr100 contributes to the 1-deoxy-D-xylulose 5-phosphate binding site. The Proton donor role is filled by His190. 3-amino-2-oxopropyl phosphate contacts are provided by residues Gly191 and 212–213 (GH).

Belongs to the PNP synthase family. In terms of assembly, homooctamer; tetramer of dimers.

It localises to the cytoplasm. It catalyses the reaction 3-amino-2-oxopropyl phosphate + 1-deoxy-D-xylulose 5-phosphate = pyridoxine 5'-phosphate + phosphate + 2 H2O + H(+). It functions in the pathway cofactor biosynthesis; pyridoxine 5'-phosphate biosynthesis; pyridoxine 5'-phosphate from D-erythrose 4-phosphate: step 5/5. Functionally, catalyzes the complicated ring closure reaction between the two acyclic compounds 1-deoxy-D-xylulose-5-phosphate (DXP) and 3-amino-2-oxopropyl phosphate (1-amino-acetone-3-phosphate or AAP) to form pyridoxine 5'-phosphate (PNP) and inorganic phosphate. The protein is Pyridoxine 5'-phosphate synthase of Synechococcus sp. (strain CC9311).